The chain runs to 231 residues: Chalcone--flavanone isomerase (231 aa).

Residues Thr-46, Asn-111, and Ser-188 each coordinate substrate.

This sequence belongs to the chalcone isomerase family. In terms of tissue distribution, pericarp.

The enzyme catalyses a chalcone = a flavanone.. It participates in secondary metabolite biosynthesis; flavonoid biosynthesis. In terms of biological role, catalyzes the intramolecular cyclization of bicyclic chalcones into tricyclic (S)-flavanones. Responsible for the isomerization of 4,2',4',6'-tetrahydroxychalcone (also termed chalcone) into naringenin. This is Chalcone--flavanone isomerase (CHI) from Zea mays (Maize).